A 380-amino-acid chain; its full sequence is uncharacterized protein (380 aa).

This is an uncharacterized protein from Homo sapiens (Human).